Reading from the N-terminus, the 304-residue chain is Acetyl-coenzyme A carboxylase carboxyl transferase subunit beta (304 aa).

A CoA carboxyltransferase N-terminal domain is found at 25–294 (LWIKCPETGE…EAARRESGSQ (270 aa)).

Belongs to the AccD/PCCB family. In terms of assembly, acetyl-CoA carboxylase is a heterohexamer composed of biotin carboxyl carrier protein (AccB), biotin carboxylase (AccC) and two subunits each of ACCase subunit alpha (AccA) and ACCase subunit beta (AccD).

Its subcellular location is the cytoplasm. The catalysed reaction is N(6)-carboxybiotinyl-L-lysyl-[protein] + acetyl-CoA = N(6)-biotinyl-L-lysyl-[protein] + malonyl-CoA. Its pathway is lipid metabolism; malonyl-CoA biosynthesis; malonyl-CoA from acetyl-CoA: step 1/1. Functionally, component of the acetyl coenzyme A carboxylase (ACC) complex. Biotin carboxylase (BC) catalyzes the carboxylation of biotin on its carrier protein (BCCP) and then the CO(2) group is transferred by the transcarboxylase to acetyl-CoA to form malonyl-CoA. The chain is Acetyl-coenzyme A carboxylase carboxyl transferase subunit beta from Sinorhizobium fredii (strain NBRC 101917 / NGR234).